The chain runs to 195 residues: Large ribosomal subunit protein bL25 (195 aa).

The protein belongs to the bacterial ribosomal protein bL25 family. CTC subfamily. Part of the 50S ribosomal subunit; part of the 5S rRNA/L5/L18/L25 subcomplex. Contacts the 5S rRNA. Binds to the 5S rRNA independently of L5 and L18.

In terms of biological role, this is one of the proteins that binds to the 5S RNA in the ribosome where it forms part of the central protuberance. This is Large ribosomal subunit protein bL25 from Geobacter metallireducens (strain ATCC 53774 / DSM 7210 / GS-15).